The following is a 591-amino-acid chain: L-fucose isomerase (591 aa).

Active-site proton acceptor residues include E337 and D361. 3 residues coordinate Mn(2+): E337, D361, and H528.

This sequence belongs to the L-fucose isomerase family. In terms of assembly, homohexamer. The cofactor is Mn(2+).

It is found in the cytoplasm. The catalysed reaction is L-fucose = L-fuculose. Its pathway is carbohydrate degradation; L-fucose degradation; L-lactaldehyde and glycerone phosphate from L-fucose: step 1/3. Its function is as follows. Converts the aldose L-fucose into the corresponding ketose L-fuculose. The polypeptide is L-fucose isomerase (Salmonella paratyphi A (strain ATCC 9150 / SARB42)).